The sequence spans 61 residues: Large ribosomal subunit protein eL37 (61 aa).

Residues C18, C21, C33, and C36 each coordinate Zn(2+). The C4-type zinc-finger motif lies at 18–36 (CRRCGRNAYNPTKKYCASC).

It belongs to the eukaryotic ribosomal protein eL37 family. Zn(2+) serves as cofactor.

Functionally, binds to the 23S rRNA. In Methanosphaera stadtmanae (strain ATCC 43021 / DSM 3091 / JCM 11832 / MCB-3), this protein is Large ribosomal subunit protein eL37.